We begin with the raw amino-acid sequence, 275 residues long: Tryptophan synthase alpha chain (275 aa).

Active-site proton acceptor residues include Glu-58 and Asp-69.

It belongs to the TrpA family. In terms of assembly, tetramer of two alpha and two beta chains. Ubiquitously expressed at low levels in seedlings, roots, hypocotyls, cotyledons, stems, leaves, inflorescences, flowers, siliques and seeds.

It is found in the cytoplasm. It carries out the reaction (1S,2R)-1-C-(indol-3-yl)glycerol 3-phosphate + L-serine = D-glyceraldehyde 3-phosphate + L-tryptophan + H2O. The enzyme catalyses (1S,2R)-1-C-(indol-3-yl)glycerol 3-phosphate = indole + D-glyceraldehyde 3-phosphate. It functions in the pathway amino-acid biosynthesis; L-tryptophan biosynthesis; L-tryptophan from chorismate: step 5/5. Its function is as follows. The alpha subunit is responsible for the aldol cleavage of indoleglycerol phosphate to indole and glyceraldehyde 3-phosphate. Contributes to the tryptophan-independent indole biosynthesis, and possibly to auxin production. This is Tryptophan synthase alpha chain (TRPA1) from Arabidopsis thaliana (Mouse-ear cress).